The primary structure comprises 502 residues: Glutamate decarboxylase 1 (502 aa).

The residue at position 8 (S8) is a Phosphoserine. K277 carries the N6-(pyridoxal phosphate)lysine modification. A calmodulin-binding region spans residues 469–502 (LMVTVKKSDIDKQRDIITGWKKFVADRKKTSGIC).

It belongs to the group II decarboxylase family. In terms of assembly, homohexamer. Interacts with calmodulin with a 1:3 stoichiometry. Pyridoxal 5'-phosphate serves as cofactor. As to expression, expressed in roots. Detected at low levels in shoots of young seedlings. Not detected in the root tips or in the central vascular bundle in the elongating region of mature roots.

The catalysed reaction is L-glutamate + H(+) = 4-aminobutanoate + CO2. Its activity is regulated as follows. Up-regulated by calmodulin binding at physiological pH. In terms of biological role, catalyzes the conversion of glutamate to 4-aminobutanoate (GABA). The calmodulin-binding is calcium-dependent and it is proposed to directly or indirectly form a calcium regulated control of GABA biosynthesis. The chain is Glutamate decarboxylase 1 (GAD1) from Arabidopsis thaliana (Mouse-ear cress).